The following is a 246-amino-acid chain: Mast cell protease-like protein (246 aa).

The first 18 residues, 1 to 18, serve as a signal peptide directing secretion; it reads MQALLFLMALLLPSGAGA. Residues 19-20 constitute a propeptide, activation peptide; sequence EE. The 224-residue stretch at 21–244 folds into the Peptidase S1 domain; that stretch reads IIGGVESEPH…HVPWINRVIK (224 aa). Cysteine 50 and cysteine 66 are disulfide-bonded. Catalysis depends on charge relay system residues histidine 65 and aspartate 109. Disulfide bonds link cysteine 143/cysteine 208 and cysteine 174/cysteine 187. Residue serine 202 is the Charge relay system of the active site.

Belongs to the peptidase S1 family. Granzyme subfamily.

The chain is Mast cell protease-like protein (Mcptl) from Mus musculus (Mouse).